Consider the following 145-residue polypeptide: Synaptojanin-2-binding protein (145 aa).

Residues 1–117 (MNGRVDYLVT…GHRGEGDPSG (117 aa)) are Cytoplasmic-facing. A PDZ domain is found at 13–100 (EINLTRGPSG…AVSLRVQHRL (88 aa)). A helical transmembrane segment spans residues 118 to 138 (IPIFMVLVPVFALTMVAAWAF). Residues 139-145 (MRYRQQL) lie on the Mitochondrial intermembrane side of the membrane.

As to quaternary structure, binds (via the PDZ domain) to isoform 2A of SYNJ2 (via the unique motif in the C-terminus). Interacts (via C-terminus) with RALBP1. Interacts (via PDZ domain) with ACVR2A (via C-terminus) and ACVR2B (via C-terminus). Forms a ternary complex with ACVR2A and RALBP1. Interacts with MAPK12. Interacts with DLL1; enhances DLL1 protein stability, and promotes notch signaling in endothelial cells.

Its subcellular location is the mitochondrion outer membrane. Its function is as follows. Regulates endocytosis of activin type 2 receptor kinases through the Ral/RALBP1-dependent pathway and may be involved in suppression of activin-induced signal transduction. The polypeptide is Synaptojanin-2-binding protein (SYNJ2BP) (Homo sapiens (Human)).